Here is a 233-residue protein sequence, read N- to C-terminus: 5'-methylthioadenosine/S-adenosylhomocysteine nucleosidase (233 aa).

Catalysis depends on glutamate 12, which acts as the Proton acceptor. Substrate is bound by residues glycine 78, isoleucine 156, and 177–178 (ME). Aspartate 201 serves as the catalytic Proton donor.

It belongs to the PNP/UDP phosphorylase family. MtnN subfamily.

The catalysed reaction is S-adenosyl-L-homocysteine + H2O = S-(5-deoxy-D-ribos-5-yl)-L-homocysteine + adenine. The enzyme catalyses S-methyl-5'-thioadenosine + H2O = 5-(methylsulfanyl)-D-ribose + adenine. It catalyses the reaction 5'-deoxyadenosine + H2O = 5-deoxy-D-ribose + adenine. Its pathway is amino-acid biosynthesis; L-methionine biosynthesis via salvage pathway; S-methyl-5-thio-alpha-D-ribose 1-phosphate from S-methyl-5'-thioadenosine (hydrolase route): step 1/2. In terms of biological role, catalyzes the irreversible cleavage of the glycosidic bond in both 5'-methylthioadenosine (MTA) and S-adenosylhomocysteine (SAH/AdoHcy) to adenine and the corresponding thioribose, 5'-methylthioribose and S-ribosylhomocysteine, respectively. Also cleaves 5'-deoxyadenosine, a toxic by-product of radical S-adenosylmethionine (SAM) enzymes, into 5-deoxyribose and adenine. The polypeptide is 5'-methylthioadenosine/S-adenosylhomocysteine nucleosidase (Listeria welshimeri serovar 6b (strain ATCC 35897 / DSM 20650 / CCUG 15529 / CIP 8149 / NCTC 11857 / SLCC 5334 / V8)).